The sequence spans 210 residues: Ribonuclease HII (210 aa).

One can recognise an RNase H type-2 domain in the interval 17 to 206 (DIICGVDEAG…VRALLGGVTP (190 aa)). Residues Asp-23, Glu-24, and Asp-115 each contribute to the a divalent metal cation site.

Belongs to the RNase HII family. Mn(2+) is required as a cofactor. It depends on Mg(2+) as a cofactor.

Its subcellular location is the cytoplasm. It carries out the reaction Endonucleolytic cleavage to 5'-phosphomonoester.. Functionally, endonuclease that specifically degrades the RNA of RNA-DNA hybrids. The chain is Ribonuclease HII from Janthinobacterium sp. (strain Marseille) (Minibacterium massiliensis).